A 260-amino-acid chain; its full sequence is Indole-3-glycerol phosphate synthase (260 aa).

It belongs to the TrpC family.

It carries out the reaction 1-(2-carboxyphenylamino)-1-deoxy-D-ribulose 5-phosphate + H(+) = (1S,2R)-1-C-(indol-3-yl)glycerol 3-phosphate + CO2 + H2O. It participates in amino-acid biosynthesis; L-tryptophan biosynthesis; L-tryptophan from chorismate: step 4/5. The protein is Indole-3-glycerol phosphate synthase of Neisseria meningitidis serogroup B (strain ATCC BAA-335 / MC58).